The chain runs to 193 residues: Large ribosomal subunit protein uL5 (193 aa).

The protein belongs to the universal ribosomal protein uL5 family. As to quaternary structure, part of the 50S ribosomal subunit; part of the 5S rRNA/L5/L18/L25 subcomplex. Contacts the 5S rRNA and the P site tRNA. Forms a bridge to the 30S subunit in the 70S ribosome.

This is one of the proteins that bind and probably mediate the attachment of the 5S RNA into the large ribosomal subunit, where it forms part of the central protuberance. In the 70S ribosome it contacts protein S13 of the 30S subunit (bridge B1b), connecting the 2 subunits; this bridge is implicated in subunit movement. Contacts the P site tRNA; the 5S rRNA and some of its associated proteins might help stabilize positioning of ribosome-bound tRNAs. This is Large ribosomal subunit protein uL5 from Novosphingobium aromaticivorans (strain ATCC 700278 / DSM 12444 / CCUG 56034 / CIP 105152 / NBRC 16084 / F199).